A 429-amino-acid polypeptide reads, in one-letter code: 5-methylthioadenosine/S-adenosylhomocysteine deaminase (429 aa).

Zn(2+) is bound by residues His66 and His68. Substrate is bound by residues Glu95, Arg147, Arg158, and His181. His208 provides a ligand contact to Zn(2+). The substrate site is built by Glu211 and Asp296. Asp296 is a binding site for Zn(2+).

The protein belongs to the metallo-dependent hydrolases superfamily. MTA/SAH deaminase family. The cofactor is Zn(2+).

It catalyses the reaction S-adenosyl-L-homocysteine + H2O + H(+) = S-inosyl-L-homocysteine + NH4(+). It carries out the reaction S-methyl-5'-thioadenosine + H2O + H(+) = S-methyl-5'-thioinosine + NH4(+). In terms of biological role, catalyzes the deamination of 5-methylthioadenosine and S-adenosyl-L-homocysteine into 5-methylthioinosine and S-inosyl-L-homocysteine, respectively. Is also able to deaminate adenosine. This chain is 5-methylthioadenosine/S-adenosylhomocysteine deaminase, found in Caldicellulosiruptor saccharolyticus (strain ATCC 43494 / DSM 8903 / Tp8T 6331).